The chain runs to 37 residues: Cytochrome b6-f complex subunit 5 (37 aa).

A helical transmembrane segment spans residues 5 to 25 (LLSGIVLGMIPVTLAGLFVTA).

This sequence belongs to the PetG family. The 4 large subunits of the cytochrome b6-f complex are cytochrome b6, subunit IV (17 kDa polypeptide, PetD), cytochrome f and the Rieske protein, while the 4 small subunits are PetG, PetL, PetM and PetN. The complex functions as a dimer.

The protein resides in the plastid. The protein localises to the chloroplast thylakoid membrane. In terms of biological role, component of the cytochrome b6-f complex, which mediates electron transfer between photosystem II (PSII) and photosystem I (PSI), cyclic electron flow around PSI, and state transitions. PetG is required for either the stability or assembly of the cytochrome b6-f complex. This chain is Cytochrome b6-f complex subunit 5, found in Staurastrum punctulatum (Green alga).